The primary structure comprises 57 residues: UPF0391 membrane protein Smed_4051 (57 aa).

The next 2 membrane-spanning stretches (helical) occupy residues 4–24 and 33–53; these read WALIFFVISLIAGFLGFSGIS and ILFYIAVIIFLVFLVLALAVG.

This sequence belongs to the UPF0391 family.

The protein localises to the cell membrane. This chain is UPF0391 membrane protein Smed_4051, found in Sinorhizobium medicae (strain WSM419) (Ensifer medicae).